Here is a 150-residue protein sequence, read N- to C-terminus: Small ribosomal subunit protein eS19 (150 aa).

Belongs to the eukaryotic ribosomal protein eS19 family. In terms of assembly, part of the 30S ribosomal subunit.

In terms of biological role, may be involved in maturation of the 30S ribosomal subunit. The polypeptide is Small ribosomal subunit protein eS19 (rps19e) (Pyrococcus abyssi (strain GE5 / Orsay)).